The chain runs to 199 residues: Ribonuclease P protein subunit p25 (199 aa).

Over residues 1–11 (MENFRKVRSEE) the composition is skewed to basic and acidic residues. Disordered stretches follow at residues 1 to 31 (MENF…FADL) and 146 to 199 (PRQL…DRTA). Residue serine 172 is modified to Phosphoserine. Acidic residues predominate over residues 190 to 199 (PEAENEDRTA).

Belongs to the histone-like Alba family. Component of nuclear RNase P and RNase MRP ribonucleoproteins. RNase P consists of a catalytic RNA moiety and 10 different protein chains; POP1, POP4, POP5, POP7, RPP14, RPP21, RPP25, RPP30, RPP38 and RPP40. Within the RNase P complex, POP1, POP7 and RPP25 form the 'finger' subcomplex, POP5, RPP14, RPP40 and homodimeric RPP30 form the 'palm' subcomplex, and RPP21, POP4 and RPP38 form the 'wrist' subcomplex. All subunits of the RNase P complex interact with the catalytic RNA. Several subunits of RNase P are also part of the RNase MRP complex. RNase MRP consists of a catalytic RNA moiety and about 8 protein subunits; POP1, POP7, RPP25, RPP30, RPP38, RPP40 and possibly also POP4 and POP5. POP7 forms a heterodimer with RPP25 that binds to the P3 stem loop of the catalytic RNA.

Its subcellular location is the nucleus. It is found in the nucleolus. Its function is as follows. Component of ribonuclease P, a ribonucleoprotein complex that generates mature tRNA molecules by cleaving their 5'-ends. Also a component of the MRP ribonuclease complex, which cleaves pre-rRNA sequences. The polypeptide is Ribonuclease P protein subunit p25 (Rpp25) (Mus musculus (Mouse)).